We begin with the raw amino-acid sequence, 147 residues long: D-aminoacyl-tRNA deacylase (147 aa).

A Gly-cisPro motif, important for rejection of L-amino acids motif is present at residues glycine 136–proline 137.

This sequence belongs to the DTD family. Homodimer.

The protein localises to the cytoplasm. It catalyses the reaction glycyl-tRNA(Ala) + H2O = tRNA(Ala) + glycine + H(+). The enzyme catalyses a D-aminoacyl-tRNA + H2O = a tRNA + a D-alpha-amino acid + H(+). In terms of biological role, an aminoacyl-tRNA editing enzyme that deacylates mischarged D-aminoacyl-tRNAs. Also deacylates mischarged glycyl-tRNA(Ala), protecting cells against glycine mischarging by AlaRS. Acts via tRNA-based rather than protein-based catalysis; rejects L-amino acids rather than detecting D-amino acids in the active site. By recycling D-aminoacyl-tRNA to D-amino acids and free tRNA molecules, this enzyme counteracts the toxicity associated with the formation of D-aminoacyl-tRNA entities in vivo and helps enforce protein L-homochirality. The polypeptide is D-aminoacyl-tRNA deacylase (Streptococcus uberis (strain ATCC BAA-854 / 0140J)).